Reading from the N-terminus, the 207-residue chain is uncharacterized protein (207 aa).

Belongs to the methyltransferase superfamily.

This is an uncharacterized protein from Escherichia coli (strain K12).